The primary structure comprises 120 residues: Flagellar protein FliT (120 aa).

A required for homodimerization region spans residues methionine 1–isoleucine 50. Residues leucine 60–arginine 98 are fliD binding.

The protein belongs to the FliT family. In terms of assembly, homodimer. Interacts with FliD and FlhC.

It is found in the cytoplasm. Its subcellular location is the cytosol. In terms of biological role, dual-function protein that regulates the transcription of class 2 flagellar operons and that also acts as an export chaperone for the filament-capping protein FliD. As a transcriptional regulator, acts as an anti-FlhDC factor; it directly binds FlhC, thus inhibiting the binding of the FlhC/FlhD complex to class 2 promoters, resulting in decreased expression of class 2 flagellar operons. As a chaperone, effects FliD transition to the membrane by preventing its premature polymerization, and by directing it to the export apparatus. The chain is Flagellar protein FliT from Yersinia pseudotuberculosis serotype IB (strain PB1/+).